The sequence spans 499 residues: MTVATGDPVDEAAALPGHPQDTYDPEADHECCERVVINISGLRFETQLKTLAQFPETLLGDPKKRMRYFDPLRNEYFFDRNRPSFDAILYYYQSGGRLRRPVNVPLDIFSEEIRFYELGEEAMEMFREDEGYIKEEERPLPENEFQRQVWLLFEYPESSGPARIIAIVSVMVILISIVSFCLETLPIFRDENEDMHGGGVTFHTYSNSTIGYQQSTSFTDPFFIVETLCIIWFSFEFLVRFFACPSKAGFFTNIMNIIDIVAIIPYFITLGTELAEKPEDAQQGQQAMSLAILRVIRLVRVFRIFKLSRHSKGLQILGQTLKASMRELGLLIFFLFIGVILFSSAVYFAEADERDSQFPSIPDAFWWAVVSMTTVGYGDMVPTTIGGKIVGSLCAIAGVLTIALPVPVIVSNFNYFYHRETEGEEQAQYLQVTSCPKIPSSPDLKKSRSASTISKSDYMEIQEGVNNSNEDFREENLKTANCTLANTNYVNITKMLTDV.

The segment at 1–26 is disordered; that stretch reads MTVATGDPVDEAAALPGHPQDTYDPE. A tetramerization domain region spans residues 1 to 125; that stretch reads MTVATGDPVD…YELGEEAMEM (125 aa). Over 1–160 the chain is Cytoplasmic; that stretch reads MTVATGDPVD…LLFEYPESSG (160 aa). A helical membrane pass occupies residues 161 to 182; that stretch reads PARIIAIVSVMVILISIVSFCL. The Extracellular portion of the chain corresponds to 183-221; that stretch reads ETLPIFRDENEDMHGGGVTFHTYSNSTIGYQQSTSFTDP. An N-linked (GlcNAc...) asparagine glycan is attached at Asn-207. The helical transmembrane segment at 222 to 243 threads the bilayer; the sequence is FFIVETLCIIWFSFEFLVRFFA. Cys-244 carries S-palmitoyl cysteine lipidation. The Cytoplasmic portion of the chain corresponds to 244-254; that stretch reads CPSKAGFFTNI. Residues 255–275 traverse the membrane as a helical segment; the sequence is MNIIDIVAIIPYFITLGTELA. The Extracellular portion of the chain corresponds to 276-289; the sequence is EKPEDAQQGQQAMS. The helical; Voltage-sensor transmembrane segment at 290–310 threads the bilayer; the sequence is LAILRVIRLVRVFRIFKLSRH. Over 311–325 the chain is Cytoplasmic; sequence SKGLQILGQTLKASM. Residues 312–325 are S4-S5 linker; it reads KGLQILGQTLKASM. Residues 326 to 347 form a helical membrane-spanning segment; it reads RELGLLIFFLFIGVILFSSAVY. Topologically, residues 348 to 361 are extracellular; the sequence is FAEADERDSQFPSI. The segment at residues 362-373 is an intramembrane region (helical); it reads PDAFWWAVVSMT. The Selectivity filter signature appears at 374–379; it reads TVGYGD. The stretch at 374–381 is an intramembrane region; that stretch reads TVGYGDMV. Residues 382-388 lie on the Extracellular side of the membrane; the sequence is PTTIGGK. The helical transmembrane segment at 389–417 threads the bilayer; sequence IVGSLCAIAGVLTIALPVPVIVSNFNYFY. Topologically, residues 418–499 are cytoplasmic; it reads HRETEGEEQA…VNITKMLTDV (82 aa). Tyr-429 carries the phosphotyrosine modification. Phosphoserine occurs at positions 434, 440, 441, and 449. Tyr-458 is modified (phosphotyrosine). The residue at position 468 (Ser-468) is a Phosphoserine. Residues 497-499 carry the PDZ-binding motif; the sequence is TDV.

This sequence belongs to the potassium channel family. A (Shaker) (TC 1.A.1.2) subfamily. Kv1.2/KCNA2 sub-subfamily. Homotetramer and heterotetramer with other channel-forming alpha subunits, such as KCNA1, KCNA4, KCNA5, KCNA6 and KCNA7. Channel activity is regulated by interaction with beta subunits, including KCNAB1 and KCNAB2. Identified in a complex with KCNA1 and KCNAB2. Identified in a complex with KCNA5 and KCNAB1. Identified in a complex with KCNA4 and FYN. Interacts with PTK2B. Interacts (via C-terminus) with CTTN. Interacts with ADAM22. Interacts with CNTNAP2. Interacts (via C-terminus) with the PDZ domains of DLG1, DLG2 and DLG4. Interacts (via N-terminal cytoplasmic domain) with RHOA (GTP-bound form); this regulates channel activity by reducing location at the cell surface in response to CHRM1 activation. Interacts with DRD2. Interacts with SIGMAR1; cocaine consumption leads to increased interaction. Interacts with ADAM11. Interacts with LYNX1. Phosphorylated on tyrosine residues; phosphorylation increases in response to ischemia. Phosphorylated on tyrosine residues by activated PTK2B/PYK2. Phosphorylation on tyrosine residues suppresses ion channel activity. Phosphorylated on tyrosine residues in response to CHRM1 activation; this abolishes interaction with CTTN. This is probably due to endocytosis of the phosphorylated channel subunits. Phosphorylated on serine residues in response to increased cAMP levels; phosphorylation is apparently not catalyzed by PKA. Post-translationally, N-glycosylated, with complex, sialylated N-glycans. As to expression, detected in brain. Detected in cerebellum. Detected in mitral cells in the olfactory bulb. Detected in cochlea. Detected in cerebellum, particularly in the basket cell axon plexus and in the terminal regions around Purkinje cells (at protein level). Detected in juxtaparanodal regions in sciatic nerve. Detected in Schwann cells from sciatic nerve. Detected in dopamine neurons in substantia nigra. Detected in large myelinated fibers in juxtaparanodes in the CA3 and CA1 areas of the hippocampus. Detected in brain, in punctae on fiber tracts in brain stem and spinal cord, and on axons in the juxtaparanodal regions of the node of Ranvier (at protein level). Detected in dopamine neurons in the midbrain.

It localises to the cell membrane. Its subcellular location is the membrane. The protein resides in the cell projection. It is found in the axon. The protein localises to the synapse. It localises to the endoplasmic reticulum membrane. Its subcellular location is the lamellipodium membrane. The protein resides in the synaptosome. It is found in the presynaptic cell membrane. The protein localises to the dendrite. It localises to the perikaryon. Its subcellular location is the cell junction. The protein resides in the paranodal septate junction. The enzyme catalyses K(+)(in) = K(+)(out). Its activity is regulated as follows. Inhibited by 4-aminopyridine (4-AP), dendrotoxin (DTX) and charybdotoxin (CTX), but not by tetraethylammonium (TEA). Inhibited by tityustoxin-K alpha (TsTX-Kalpha), a toxin that is highly specific for KCNA2. Inhibited by maurotoxin. Inhibited by kappaM conotoxins kappaM-RIIIJ and kappaM-RIIIK. Functionally, voltage-gated potassium channel that mediates transmembrane potassium transport in excitable membranes, primarily in the brain and the central nervous system, but also in the cardiovascular system. Prevents aberrant action potential firing and regulates neuronal output. Forms tetrameric potassium-selective channels through which potassium ions pass in accordance with their electrochemical gradient. The channel alternates between opened and closed conformations in response to the voltage difference across the membrane. Can form functional homotetrameric channels and heterotetrameric channels that contain variable proportions of KCNA1, KCNA2, KCNA4, KCNA5, KCNA6, KCNA7, and possibly other family members as well; channel properties depend on the type of alpha subunits that are part of the channel. Channel properties are modulated by cytoplasmic beta subunits that regulate the subcellular location of the alpha subunits and promote rapid inactivation of delayed rectifier potassium channels. In vivo, membranes probably contain a mixture of heteromeric potassium channel complexes, making it difficult to assign currents observed in intact tissues to any particular potassium channel family member. Homotetrameric KCNA2 forms a delayed-rectifier potassium channel that opens in response to membrane depolarization, followed by slow spontaneous channel closure. In contrast, a heteromultimer formed by KCNA2 and KCNA4 shows rapid inactivation. Contributes to the regulation of action potentials in neurons. KCNA2-containing channels play a presynaptic role and prevent hyperexcitability and aberrant action potential firing. Response to toxins that are selective for KCNA1, respectively for KCNA2, suggests that heteromeric potassium channels composed of both KCNA1 and KCNA2 play a role in pacemaking and regulate the output of deep cerebellar nuclear neurons. Response to toxins that are selective for KCNA2-containing potassium channels suggests that in Purkinje cells, dendritic subthreshold KCNA2-containing potassium channels prevent random spontaneous calcium spikes, suppressing dendritic hyperexcitability without hindering the generation of somatic action potentials, and thereby play an important role in motor coordination. KCNA2-containing channels play a role in GABAergic transmission from basket cells to Purkinje cells in the cerebellum, and thereby play an import role in motor coordination. Plays a role in the induction of long-term potentiation of neuron excitability in the CA3 layer of the hippocampus. May function as down-stream effector for G protein-coupled receptors and inhibit GABAergic inputs to basolateral amygdala neurons. May contribute to the regulation of neurotransmitter release, such as gamma-aminobutyric acid (GABA). Contributes to the regulation of the axonal release of the neurotransmitter dopamine. Reduced KCNA2 expression plays a role in the perception of neuropathic pain after peripheral nerve injury, but not acute pain. Plays a role in the regulation of the time spent in non-rapid eye movement (NREM) sleep. The sequence is that of Potassium voltage-gated channel subfamily A member 2 (Kcna2) from Mus musculus (Mouse).